The chain runs to 227 residues: Cytochrome c oxidase subunit 2 (227 aa).

The Mitochondrial intermembrane portion of the chain corresponds to 1-14; sequence MAYPFQLGLQDATS. A helical transmembrane segment spans residues 15 to 45; the sequence is PIMEELLHFHDHTLMIVFLISSLVLYIISLM. Residues 46–59 lie on the Mitochondrial matrix side of the membrane; that stretch reads LTTKLTHTSTMDAQ. A helical transmembrane segment spans residues 60 to 87; the sequence is EVETVWTILPAIILILIALPSLRILYMM. At 88–227 the chain is on the mitochondrial intermembrane side; the sequence is DEINNPSLTV…YFEAWSALMV (140 aa). 6 residues coordinate Cu cation: His161, Cys196, Glu198, Cys200, His204, and Met207. Glu198 is a Mg(2+) binding site. Tyr218 carries the post-translational modification Phosphotyrosine.

This sequence belongs to the cytochrome c oxidase subunit 2 family. Component of the cytochrome c oxidase (complex IV, CIV), a multisubunit enzyme composed of 14 subunits. The complex is composed of a catalytic core of 3 subunits MT-CO1, MT-CO2 and MT-CO3, encoded in the mitochondrial DNA, and 11 supernumerary subunits COX4I, COX5A, COX5B, COX6A, COX6B, COX6C, COX7A, COX7B, COX7C, COX8 and NDUFA4, which are encoded in the nuclear genome. The complex exists as a monomer or a dimer and forms supercomplexes (SCs) in the inner mitochondrial membrane with NADH-ubiquinone oxidoreductase (complex I, CI) and ubiquinol-cytochrome c oxidoreductase (cytochrome b-c1 complex, complex III, CIII), resulting in different assemblies (supercomplex SCI(1)III(2)IV(1) and megacomplex MCI(2)III(2)IV(2)). Found in a complex with TMEM177, COA6, COX18, COX20, SCO1 and SCO2. Interacts with TMEM177 in a COX20-dependent manner. Interacts with COX20. Interacts with COX16. Cu cation serves as cofactor.

The protein resides in the mitochondrion inner membrane. The enzyme catalyses 4 Fe(II)-[cytochrome c] + O2 + 8 H(+)(in) = 4 Fe(III)-[cytochrome c] + 2 H2O + 4 H(+)(out). Its function is as follows. Component of the cytochrome c oxidase, the last enzyme in the mitochondrial electron transport chain which drives oxidative phosphorylation. The respiratory chain contains 3 multisubunit complexes succinate dehydrogenase (complex II, CII), ubiquinol-cytochrome c oxidoreductase (cytochrome b-c1 complex, complex III, CIII) and cytochrome c oxidase (complex IV, CIV), that cooperate to transfer electrons derived from NADH and succinate to molecular oxygen, creating an electrochemical gradient over the inner membrane that drives transmembrane transport and the ATP synthase. Cytochrome c oxidase is the component of the respiratory chain that catalyzes the reduction of oxygen to water. Electrons originating from reduced cytochrome c in the intermembrane space (IMS) are transferred via the dinuclear copper A center (CU(A)) of subunit 2 and heme A of subunit 1 to the active site in subunit 1, a binuclear center (BNC) formed by heme A3 and copper B (CU(B)). The BNC reduces molecular oxygen to 2 water molecules using 4 electrons from cytochrome c in the IMS and 4 protons from the mitochondrial matrix. The sequence is that of Cytochrome c oxidase subunit 2 (MT-CO2) from Cuon alpinus (Dhole).